A 1359-amino-acid polypeptide reads, in one-letter code: Junctional cadherin 5-associated protein (1359 aa).

9 disordered regions span residues 1–147 (MYSV…SLPV), 249–411 (PLNE…PAHP), 454–554 (NSSP…TCET), 591–813 (SHLP…CNSK), 840–1076 (KELQ…TIEI), 1105–1141 (RAGQNQPAEPDASACTPESPQEELLSRPAPADVPRVS), 1157–1207 (PLFV…KDVE), 1225–1260 (SVAGSEKRLRSPSKVIESLQEKLASPPRRADPDRLM), and 1276–1359 (FRNA…VERV). Positions 15-28 (LSRDPPASREDNPK) are enriched in basic and acidic residues. Polar residues-rich tracts occupy residues 82–91 (PQSTSASRTS) and 98–112 (QPPSAWSSHPPTGND). The span at 120 to 135 (RQEARSQKPREHENLE) shows a compositional bias: basic and acidic residues. Residues 302-321 (QQSRGGADSSDSQDSQQMDA) are compositionally biased toward low complexity. Residues 335-353 (LEPPVYVPPPSYRSPPQNI) are compositionally biased toward pro residues. A compositionally biased stretch (polar residues) spans 539 to 554 (RQVSSPYSQGESTCET). The segment covering 591–613 (SHLPDRDMDNNDLKPSADQKNGS) has biased composition (basic and acidic residues). Composition is skewed to polar residues over residues 619–632 (LQEQSLLSMSSTDL), 689–704 (QQTQTSFSEEPQSSQL), and 756–773 (LSPSSNSAFSRTSLSVDQ). Positions 849 to 859 (SSSSSSSSSSS) are enriched in low complexity. Positions 868–880 (QENRAHCRQEDVG) are enriched in basic and acidic residues. Polar residues predominate over residues 1003-1013 (PKITSAFSSVK). Phosphoserine is present on residues Ser1044 and Ser1050. The residue at position 1194 (Ser1194) is a Phosphoserine. The residue at position 1281 (Ser1281) is a Phosphoserine. Residues 1324–1342 (SISREEKEHPAAQKEKSMD) are compositionally biased toward basic and acidic residues.

The protein localises to the cell junction. It is found in the adherens junction. This Homo sapiens (Human) protein is Junctional cadherin 5-associated protein.